Here is a 911-residue protein sequence, read N- to C-terminus: General transcription factor 3C polypeptide 2 (911 aa).

Disordered stretches follow at residues 24-187 (DSPG…RRRA) and 205-297 (ALPA…MAPN). The span at 35–46 (DVKTSSEMTSAE) shows a compositional bias: polar residues. At serine 63 the chain carries Phosphoserine. Positions 64 to 81 (PDQRRLPPEQESLSRLEQ) are enriched in basic and acidic residues. The span at 92–112 (SKPRASKPGRKRGGRTRKGPK) shows a compositional bias: basic residues. Over residues 114 to 123 (PQQPNPPSAP) the composition is skewed to pro residues. Phosphoserine is present on residues serine 132, serine 165, serine 167, serine 220, and serine 260. Residues 253–262 (EAEDVEESEG) are compositionally biased toward acidic residues. Low complexity predominate over residues 263 to 277 (PSESSSEPEPVVPRS). WD repeat units lie at residues 366–426 (PEDG…MNET), 427–483 (HPLS…AWEL), 484–535 (PGTP…IYKV), 536–603 (QCVA…SLKL), 604–654 (YPFQ…NSIK), and 655–690 (RFLSTELAWLLPYNGVTVAQDNCYASYGLCGIHYID). Residue serine 597 is modified to Phosphoserine. Positions 765 to 785 (SPEGPDHSSASSGVPNPPKAR) are disordered. Phosphoserine occurs at positions 871, 892, and 893. The interval 889 to 911 (FQPSSPTRRPGFSPTSHRLLPTP) is disordered. Threonine 895 bears the Phosphothreonine mark. Serine 901 is subject to Phosphoserine.

Part of the TFIIIC subcomplex TFIIIC2, consisting of six subunits, GTF3C1, GTF3C2, GTF3C3, GTF3C4, GTF3C5 and GTF3C6.

It localises to the nucleus. Required for RNA polymerase III-mediated transcription. Component of TFIIIC that initiates transcription complex assembly on tRNA and is required for transcription of 5S rRNA and other stable nuclear and cytoplasmic RNAs. May play a direct role in stabilizing interactions of TFIIIC2 with TFIIIC1. The sequence is that of General transcription factor 3C polypeptide 2 (GTF3C2) from Homo sapiens (Human).